Here is a 300-residue protein sequence, read N- to C-terminus: GTPase Era (300 aa).

Residues Lys6–Glu173 form the Era-type G domain. Residues Gly14 to Ser21 are G1. Position 14-21 (Gly14–Ser21) interacts with GTP. The G2 stretch occupies residues Gln40–Asn44. The interval Asp61–Gly64 is G3. GTP is bound by residues Asp61–Ile65 and Asn123–Asp126. The tract at residues Asn123 to Asp126 is G4. The G5 stretch occupies residues Ile152–Ala154. The 78-residue stretch at Thr204–Lys281 folds into the KH type-2 domain.

Belongs to the TRAFAC class TrmE-Era-EngA-EngB-Septin-like GTPase superfamily. Era GTPase family. As to quaternary structure, monomer.

The protein resides in the cytoplasm. Its subcellular location is the cell membrane. Its function is as follows. An essential GTPase that binds both GDP and GTP, with rapid nucleotide exchange. Plays a role in 16S rRNA processing and 30S ribosomal subunit biogenesis and possibly also in cell cycle regulation and energy metabolism. The chain is GTPase Era from Oceanobacillus iheyensis (strain DSM 14371 / CIP 107618 / JCM 11309 / KCTC 3954 / HTE831).